Consider the following 262-residue polypeptide: Cap-specific mRNA (nucleoside-2'-O-)-methyltransferase (262 aa).

The RrmJ-type SAM-dependent 2'-O-MTase domain maps to 34-226 (TRRPRCWRKL…ERYLICFNKL (193 aa)). S-adenosyl-L-methionine-binding residues include glycine 67 and aspartate 140. Catalysis depends on lysine 180, which acts as the Proton acceptor.

It catalyses the reaction a 5'-end (N(7)-methyl 5'-triphosphoguanosine)-ribonucleoside in mRNA + S-adenosyl-L-methionine = a 5'-end (N(7)-methyl 5'-triphosphoguanosine)-(2'-O-methyl-ribonucleoside) in mRNA + S-adenosyl-L-homocysteine + H(+). Its function is as follows. S-adenosyl-L-methionine-dependent methyltransferase that mediates mRNA cap 2'-O-ribose methylation to the 5'-cap structure of late viral transcripts. This chain is Cap-specific mRNA (nucleoside-2'-O-)-methyltransferase, found in Lepidoptera (butterflies and moths).